The chain runs to 498 residues: AP2-like ethylene-responsive transcription factor AIL7 (498 aa).

Over residues 186–195 (TSDQPLSCNN) the composition is skewed to polar residues. Positions 186-220 (TSDQPLSCNNGERGGNSNKKKTVSKKETSDDSKKK) are disordered. The span at 209-220 (SKKETSDDSKKK) shows a compositional bias: basic and acidic residues. DNA-binding regions (AP2/ERF) lie at residues 231 to 297 (IYRG…TNFP) and 333 to 391 (IYRG…TNFE). Over residues 422-451 (ESPSSSSSDHNLQQQQLLPSSSPSDQNPNS) the composition is skewed to low complexity. The disordered stretch occupies residues 422–452 (ESPSSSSSDHNLQQQQLLPSSSPSDQNPNSI).

Belongs to the AP2/ERF transcription factor family. AP2 subfamily. As to quaternary structure, interacts with HDG2, and possibly with HDG3, HDG7, ANL2, ATML1 and PDF2. Expressed in roots, seedlings, inflorescence, and siliques. Also detected at low levels in leaves.

It localises to the nucleus. Functionally, probably acts as a transcriptional activator. Binds to the GCC-box pathogenesis-related promoter element. May be involved in the regulation of gene expression by stress factors and by components of stress signal transduction pathways. The protein is AP2-like ethylene-responsive transcription factor AIL7 of Arabidopsis thaliana (Mouse-ear cress).